Reading from the N-terminus, the 375-residue chain is Queuine tRNA-ribosyltransferase (375 aa).

The Proton acceptor role is filled by Asp89. Substrate is bound by residues 89–93 (DSGGF), Asp143, Gln187, and Gly214. Residues 245-251 (GVGKPED) form an RNA binding region. The Nucleophile role is filled by Asp264. Residues 269-273 (TRNAR) are RNA binding; important for wobble base 34 recognition. Zn(2+) is bound by residues Cys302, Cys304, Cys307, and His333.

The protein belongs to the queuine tRNA-ribosyltransferase family. As to quaternary structure, homodimer. Within each dimer, one monomer is responsible for RNA recognition and catalysis, while the other monomer binds to the replacement base PreQ1. Requires Zn(2+) as cofactor.

It catalyses the reaction 7-aminomethyl-7-carbaguanine + guanosine(34) in tRNA = 7-aminomethyl-7-carbaguanosine(34) in tRNA + guanine. It functions in the pathway tRNA modification; tRNA-queuosine biosynthesis. Catalyzes the base-exchange of a guanine (G) residue with the queuine precursor 7-aminomethyl-7-deazaguanine (PreQ1) at position 34 (anticodon wobble position) in tRNAs with GU(N) anticodons (tRNA-Asp, -Asn, -His and -Tyr). Catalysis occurs through a double-displacement mechanism. The nucleophile active site attacks the C1' of nucleotide 34 to detach the guanine base from the RNA, forming a covalent enzyme-RNA intermediate. The proton acceptor active site deprotonates the incoming PreQ1, allowing a nucleophilic attack on the C1' of the ribose to form the product. After dissociation, two additional enzymatic reactions on the tRNA convert PreQ1 to queuine (Q), resulting in the hypermodified nucleoside queuosine (7-(((4,5-cis-dihydroxy-2-cyclopenten-1-yl)amino)methyl)-7-deazaguanosine). This is Queuine tRNA-ribosyltransferase from Aliivibrio fischeri (strain ATCC 700601 / ES114) (Vibrio fischeri).